Here is a 417-residue protein sequence, read N- to C-terminus: C4-dicarboxylate transport protein (417 aa).

8 helical membrane passes run 4–26 (IYVQ…PQIG), 41–60 (KLVI…ARMG), 72–94 (ALIY…GRLI), 137–159 (FIGA…TGFA), 180–202 (LFFG…AMGF), 217–239 (ALVA…GIAW), 285–307 (VVGL…YMTL), and 347–369 (FITL…AILV).

It belongs to the dicarboxylate/amino acid:cation symporter (DAACS) (TC 2.A.23) family.

It localises to the cell inner membrane. In terms of biological role, responsible for the transport of dicarboxylates such as succinate, fumarate, and malate from the periplasm across the membrane. The chain is C4-dicarboxylate transport protein from Caulobacter vibrioides (strain ATCC 19089 / CIP 103742 / CB 15) (Caulobacter crescentus).